A 146-amino-acid chain; its full sequence is Large ribosomal subunit protein uL15 (146 aa).

The disordered stretch occupies residues 1–39 (MTLKLHNLRPAPGAKTAKTRVGRGEGSKGKTAGRGTKGT).

Belongs to the universal ribosomal protein uL15 family. Part of the 50S ribosomal subunit.

In terms of biological role, binds to the 23S rRNA. The polypeptide is Large ribosomal subunit protein uL15 (Nocardioides sp. (strain ATCC BAA-499 / JS614)).